A 176-amino-acid chain; its full sequence is Peptide methionine sulfoxide reductase MsrA (176 aa).

Residue Cys12 is part of the active site.

The protein belongs to the MsrA Met sulfoxide reductase family.

It carries out the reaction L-methionyl-[protein] + [thioredoxin]-disulfide + H2O = L-methionyl-(S)-S-oxide-[protein] + [thioredoxin]-dithiol. The enzyme catalyses [thioredoxin]-disulfide + L-methionine + H2O = L-methionine (S)-S-oxide + [thioredoxin]-dithiol. Functionally, has an important function as a repair enzyme for proteins that have been inactivated by oxidation. Catalyzes the reversible oxidation-reduction of methionine sulfoxide in proteins to methionine. This Thermus thermophilus (strain ATCC BAA-163 / DSM 7039 / HB27) protein is Peptide methionine sulfoxide reductase MsrA.